We begin with the raw amino-acid sequence, 119 residues long: Holo-[acyl-carrier-protein] synthase (119 aa).

2 residues coordinate Mg(2+): D8 and E58.

Belongs to the P-Pant transferase superfamily. AcpS family. The cofactor is Mg(2+).

The protein localises to the cytoplasm. The enzyme catalyses apo-[ACP] + CoA = holo-[ACP] + adenosine 3',5'-bisphosphate + H(+). Transfers the 4'-phosphopantetheine moiety from coenzyme A to a Ser of acyl-carrier-protein. This is Holo-[acyl-carrier-protein] synthase from Streptococcus thermophilus (strain CNRZ 1066).